The following is a 435-amino-acid chain: MSACLSSGGGGAAAYSFELEKVKSPPPSSSTTTTRATSPSSTISESSNSPLAISTRKPRTQRKRPNQTYNEAATLLSTAYPNIFSSNLSSKQKTHSSSNSHFYGPLLSDNDDASDLLLPYESIEEPDFLFHPTIQTKTEFFSDQKEVNSGGDCYGGEIEKFDFSDEFDAESILDEDIEEGIDSIMGTVVESNSNSGIYESRVPGMINRGGRSSSNRIGKLEQMMMINSWNRSSNGFNFPLGLGLRSALRENDDTKLWKIHTVDFEQISPRIQTVKTETAISTVDEEKSDGKKVVISGEKSNKKKKKKKMTVTTTLITESKSLEDTEETSLKRTGPLLKLDYDGVLEAWSDKTSPFPDEIQGSEAVDVNARLAQIDLFGDSGMREASVLRYKEKRRTRLFSKKIRYQVRKLNADQRPRMKGRFVRRPNESTPSGQR.

The N-terminal 59 residues, 1-59 (MSACLSSGGGGAAAYSFELEKVKSPPPSSSTTTTRATSPSSTISESSNSPLAISTRKPR), are a transit peptide targeting the chloroplast. 2 disordered regions span residues 21–66 (KVKS…KRPN) and 412–435 (ADQR…SGQR). A compositionally biased stretch (low complexity) spans 29–49 (SSTTTTRATSPSSTISESSNS). A compositionally biased stretch (basic residues) spans 56-65 (RKPRTQRKRP). One can recognise a CCT domain in the interval 383-425 (REASVLRYKEKRRTRLFSKKIRYQVRKLNADQRPRMKGRFVRR).

In terms of tissue distribution, expressed in leaves and young flower buds.

The protein resides in the plastid. It localises to the chloroplast. Its subcellular location is the nucleus. Its function is as follows. Responsible for specific up-regulation of the translocon genes TOC33 and TOC75 in leaves. Involved in the general chloroplast protein import pathway regulation, including protein import and protein translation efficiencies. The protein is Protein CHLOROPLAST IMPORT APPARATUS 2 (CIA2) of Arabidopsis thaliana (Mouse-ear cress).